The chain runs to 275 residues: tRNA pseudouridine synthase A (275 aa).

The active-site Nucleophile is Asp-56. Tyr-110 is a substrate binding site.

The protein belongs to the tRNA pseudouridine synthase TruA family.

It catalyses the reaction uridine(38/39/40) in tRNA = pseudouridine(38/39/40) in tRNA. Formation of pseudouridine at positions 38, 39 and 40 in the anticodon stem and loop of transfer RNAs. This Haloarcula marismortui (strain ATCC 43049 / DSM 3752 / JCM 8966 / VKM B-1809) (Halobacterium marismortui) protein is tRNA pseudouridine synthase A.